Reading from the N-terminus, the 366-residue chain is Aminomethyltransferase (366 aa).

It belongs to the GcvT family. In terms of assembly, the glycine cleavage system is composed of four proteins: P, T, L and H.

It catalyses the reaction N(6)-[(R)-S(8)-aminomethyldihydrolipoyl]-L-lysyl-[protein] + (6S)-5,6,7,8-tetrahydrofolate = N(6)-[(R)-dihydrolipoyl]-L-lysyl-[protein] + (6R)-5,10-methylene-5,6,7,8-tetrahydrofolate + NH4(+). In terms of biological role, the glycine cleavage system catalyzes the degradation of glycine. This Bacillus cereus (strain ATCC 10987 / NRS 248) protein is Aminomethyltransferase.